A 376-amino-acid polypeptide reads, in one-letter code: Branched-chain-amino-acid aminotransferase, cytosolic (376 aa).

K202 carries the N6-(pyridoxal phosphate)lysine modification.

The protein belongs to the class-IV pyridoxal-phosphate-dependent aminotransferase family. It depends on pyridoxal 5'-phosphate as a cofactor.

The protein localises to the cytoplasm. It carries out the reaction L-leucine + 2-oxoglutarate = 4-methyl-2-oxopentanoate + L-glutamate. The enzyme catalyses L-isoleucine + 2-oxoglutarate = (S)-3-methyl-2-oxopentanoate + L-glutamate. The catalysed reaction is L-valine + 2-oxoglutarate = 3-methyl-2-oxobutanoate + L-glutamate. It catalyses the reaction a 2-oxocarboxylate + L-methionine = 4-methylsulfanyl-2-oxobutanoate + an L-alpha-amino acid. The protein operates within amino-acid biosynthesis; L-isoleucine biosynthesis; L-isoleucine from 2-oxobutanoate: step 4/4. It functions in the pathway amino-acid biosynthesis; L-leucine biosynthesis; L-leucine from 3-methyl-2-oxobutanoate: step 4/4. It participates in amino-acid biosynthesis; L-valine biosynthesis; L-valine from pyruvate: step 4/4. Its pathway is amino-acid biosynthesis; L-methionine biosynthesis via salvage pathway; L-methionine from S-methyl-5-thio-alpha-D-ribose 1-phosphate: step 6/6. In terms of biological role, cytoplasmic isozyme of branched-chain-amino-acid aminotransferase, which catalyzes the first reaction in the catabolism of the essential branched chain amino acids (BCAAs) leucine, isoleucine, and valine. Catalyzes the formation of methionine from 2-keto-4-methylthiobutyrate (KMTB) in the methionine salvage pathway primarily using BCAAs (leucine, isoleucine, and valine) as well as lysine and proline as the amino donors. Involved in cell cycle regulation. This chain is Branched-chain-amino-acid aminotransferase, cytosolic, found in Saccharomyces cerevisiae (strain ATCC 204508 / S288c) (Baker's yeast).